A 498-amino-acid chain; its full sequence is Cytochrome P450 monooxygenase aflU (498 aa).

Residues 5–27 traverse the membrane as a helical segment; it reads TVYTSLIGLLVALTVRSIYRVYF. N-linked (GlcNAc...) asparagine glycosylation is found at Asn259 and Asn354. Cys438 contacts heme.

It belongs to the cytochrome P450 family. The cofactor is heme.

The protein localises to the membrane. The protein operates within mycotoxin biosynthesis; aflatoxin biosynthesis. In terms of biological role, cytochrome P450 monooxygenase; part of the gene cluster that mediates the biosynthesis of aflatoxins, a group of polyketide-derived furanocoumarins, and part of the most toxic and carcinogenic compounds among the known mycotoxins. The four major aflatoxins produced by A.parasiticus are aflatoxin B1 (AFB1), aflatoxin B2 (AFB2), aflatoxin G1 (AFG1) and aflatoxin G2 (AFG2). Within the aflatoxin pathway, the cytochrome P450 monooxygenase aflU is involved in the last steps in which OMST is converted to aflatoxins B1 and G1, and DHOMST to aflatoxins B2 and G2. The biosynthesis of aflatoxins begins with the norsolorinic acid synthase aflC that combines a hexanoyl starter unit produced by the fatty acid synthase aflA/aflB and 7 malonyl-CoA extender units to synthesize the precursor NOR. The second step is the conversion of NOR to averantin and requires the norsolorinic acid ketoreductase aflD, which catalyzes the dehydration of norsolorinic acid to form (1'S)-averantin. The norsolorinic acid reductases aflE and aflF may also play a role in the conversion of NOR to AVN. The cytochrome P450 monooxygenase aflG then catalyzes the hydroxylation of AVN to 5'hydroxyaverantin (HAVN). The next step is performed by the 5'-hydroxyaverantin dehydrogenase aflH that transforms HAVN to 5'-oxoaverantin (OAVN) which is further converted to averufin (AVF) by aflK that plays a dual role in the pathway, as a 5'-oxoaverantin cyclase that mediates conversion of 5'-oxoaverantin, as well as a versicolorin B synthase in a later step in the pathway. The averufin oxidase aflI catalyzes the conversion of AVF to versiconal hemiacetal acetate (VHA). VHA is then the substrate for the versiconal hemiacetal acetate esterase aflJ to yield versiconal (VAL). Versicolorin B synthase aflK then converts VAL to versicolorin B (VERB) by closing the bisfuran ring of aflatoxin which is required for DNA-binding, thus giving to aflatoxin its activity as a mutagen. Then, the activity of the versicolorin B desaturase aflL leads to versicolorin A (VERA). A branch point starts from VERB since it can also be converted to dihydrodemethylsterigmatocystin (DMDHST), probably also by aflL, VERA being a precursor for aflatoxins B1 and G1, and DMDHST for aflatoxins B2 and G2. Next, the versicolorin reductase aflM and the cytochrome P450 monooxygenase aflN are involved in conversion of VERA to demethylsterigmatocystin (DMST). AflX and aflY seem also involved in this step, through probable aflX-mediated epoxide ring-opening step following versicolorin A oxidation and aflY-mediated Baeyer-Villiger oxidation required for the formation of the xanthone ring. The methyltransferase aflO then leads to the modification of DMST to sterigmatocystin (ST), and of DMDHST to dihydrosterigmatocystin (DHST). Both ST and DHST are then substrates of the O-methyltransferase aflP to yield O-methylsterigmatocystin (OMST) and dihydro-O-methylsterigmatocystin (DHOMST), respectively. Finally OMST is converted to aflatoxins B1 and G1, and DHOMST to aflatoxins B2 and G2, via the action of several enzymes including O-methylsterigmatocystin oxidoreductase aflQ, the cytochrome P450 monooxygenase aflU, but also the NADH-dependent flavin oxidoreductase nadA which is specifically required for the synthesis of AFG1. The chain is Cytochrome P450 monooxygenase aflU from Aspergillus parasiticus (strain ATCC 56775 / NRRL 5862 / SRRC 143 / SU-1).